We begin with the raw amino-acid sequence, 624 residues long: Low affinity potassium transport system protein Kup (624 aa).

A run of 12 helical transmembrane segments spans residues 9-29, 49-69, 103-123, 137-157, 165-185, 213-233, 247-267, 276-296, 337-357, 365-385, 398-418, and 421-441; these read LPAI…TSPL, VFGF…IKYL, VIMG…TPAI, PQLD…LFMI, VGKL…GLGL, VSFI…ALYA, WFTV…ALLL, PFFL…AALA, IYIP…IVIV, LAAA…ILST, FVAL…TANL, and LLSG…VMTT.

The protein belongs to the HAK/KUP transporter (TC 2.A.72) family.

It is found in the cell inner membrane. The catalysed reaction is K(+)(in) + H(+)(in) = K(+)(out) + H(+)(out). In terms of biological role, responsible for the low-affinity transport of potassium into the cell. Likely operates as a K(+):H(+) symporter. In Shigella dysenteriae serotype 1 (strain Sd197), this protein is Low affinity potassium transport system protein Kup.